The sequence spans 594 residues: Aspartate--tRNA(Asp/Asn) ligase (594 aa).

Position 175 (Glu-175) interacts with L-aspartate. The aspartate stretch occupies residues 199–202; that stretch reads QQFK. L-aspartate-binding residues include Arg-221 and His-455. Residue 221 to 223 participates in ATP binding; sequence RDE. Glu-488 is an ATP binding site. Residue Arg-495 coordinates L-aspartate. An ATP-binding site is contributed by 540–543; sequence GIDR.

This sequence belongs to the class-II aminoacyl-tRNA synthetase family. Type 1 subfamily. Homodimer.

It localises to the cytoplasm. The catalysed reaction is tRNA(Asx) + L-aspartate + ATP = L-aspartyl-tRNA(Asx) + AMP + diphosphate. Aspartyl-tRNA synthetase with relaxed tRNA specificity since it is able to aspartylate not only its cognate tRNA(Asp) but also tRNA(Asn). Reaction proceeds in two steps: L-aspartate is first activated by ATP to form Asp-AMP and then transferred to the acceptor end of tRNA(Asp/Asn). This Ruegeria sp. (strain TM1040) (Silicibacter sp.) protein is Aspartate--tRNA(Asp/Asn) ligase.